The primary structure comprises 137 residues: Large ribosomal subunit protein eL32 (137 aa).

The tract at residues 95-137 (PSAAEIATPVSSRKRIASSPARQADRCSRSRRSKFRPRRLRAS) is disordered. Over residues 123 to 137 (RSRRSKFRPRRLRAS) the composition is skewed to basic residues.

The protein belongs to the eukaryotic ribosomal protein eL32 family.

The chain is Large ribosomal subunit protein eL32 (rpl32) from Trichoderma harzianum (Hypocrea lixii).